The primary structure comprises 235 residues: Exotoxin type C (235 aa).

An N-terminal signal peptide occupies residues 1–27 (MKKINIIKIVFIITVILISTISPIIKS). Zn(2+)-binding residues include histidine 194, histidine 228, and aspartate 230.

This sequence belongs to the staphylococcal/streptococcal toxin family.

Superantigen that acts as a causative agent of the symptoms associated with scarlet fever. Has been associated with streptococcal toxic shock-like disease and may play a role in the early events of rheumatic fever. Superantigens cross-link major histocompatibility complex (MHC) class II and T-cell receptor (TCR) molecules, resulting in an overstimulation of T-cells associated with a massive release of pyrogenic and inflammatory cytokines. The protein is Exotoxin type C of Streptococcus pyogenes serotype M18 (strain MGAS8232).